Consider the following 111-residue polypeptide: Translation initiation factor 1A (111 aa).

A compositionally biased stretch (basic residues) spans 1 to 13 (MKKSNNKNNHKNN). The tract at residues 1–30 (MKKSNNKNNHKNNHNNNQGGENIRVRSPRR) is disordered. One can recognise an S1-like domain in the interval 23 to 96 (IRVRSPRRGE…EKADVIWRYT (74 aa)).

It belongs to the eIF-1A family.

Seems to be required for maximal rate of protein biosynthesis. Enhances ribosome dissociation into subunits and stabilizes the binding of the initiator Met-tRNA(I) to 40 S ribosomal subunits. This Methanosphaera stadtmanae (strain ATCC 43021 / DSM 3091 / JCM 11832 / MCB-3) protein is Translation initiation factor 1A.